A 418-amino-acid chain; its full sequence is Pigment epithelium-derived factor (418 aa).

The N-terminal stretch at 1–19 (MQALVLLLCIGALLGHSSC) is a signal peptide. Q20 bears the Pyrrolidone carboxylic acid mark. A disordered region spans residues 20–39 (QNPASPPEEGSPDPDSTGAL). Phosphoserine; by CK2 is present on residues S24 and S114. S227 carries the phosphoserine; by PKA modification. N285 is a glycosylation site (N-linked (GlcNAc...) (complex) asparagine). The interval 371-383 (TTPSPGLQPAHLT) is O-glycosylated at one site.

This sequence belongs to the serpin family. As to quaternary structure, interacts with PNPLA2; this interaction stimulates the phospholipase A2 activity of PNPLA2. In terms of processing, the N-terminus is blocked. Extracellular phosphorylation enhances antiangiogenic activity. Post-translationally, N- and O-glycosylated. O-glycosylated with a core 1 or possibly core 8 glycan. As to expression, retinal pigment epithelial cells and blood plasma.

The protein resides in the secreted. The protein localises to the melanosome. In terms of biological role, neurotrophic protein; induces extensive neuronal differentiation in retinoblastoma cells. Potent inhibitor of angiogenesis. As it does not undergo the S (stressed) to R (relaxed) conformational transition characteristic of active serpins, it exhibits no serine protease inhibitory activity. This Homo sapiens (Human) protein is Pigment epithelium-derived factor (SERPINF1).